The primary structure comprises 597 residues: Histidine protein kinase DivJ (597 aa).

Transmembrane regions (helical) follow at residues 40 to 57 (LGWLAAVCLAAAAALFTA), 62 to 81 (WPVWAALGAGALPALVSLIF), 91 to 109 (WLLVLWAVGGSLAAVLTGG), 110 to 125 (VGGAMAAWCLAPVAAA), 137 to 158 (GAALALIGACVAALTQLSGLAP), and 159 to 188 (AAPTGPLAFVLGFLALVTTGLGLAAGLLIG). One can recognise a Histidine kinase domain in the interval 335–553 (NMSHELRTPL…TVSVRLPVLL (219 aa)). The residue at position 338 (His338) is a Phosphohistidine; by autocatalysis. Residues 561–585 (PTPPAAPEAPSAPEPAPTVEEPPPA) show a composition bias toward pro residues. Residues 561–597 (PTPPAAPEAPSAPEPAPTVEEPPPASLGDNVIAFAPR) form a disordered region.

It localises to the cell membrane. The catalysed reaction is ATP + protein L-histidine = ADP + protein N-phospho-L-histidine.. Kinase required for the regulation of cell division and differentiation. Is part of a signal transduction pathway, activating PleD by phosphorylation. This chain is Histidine protein kinase DivJ (divJ), found in Caulobacter vibrioides (strain ATCC 19089 / CIP 103742 / CB 15) (Caulobacter crescentus).